Consider the following 251-residue polypeptide: Putative mediator of RNA polymerase II transcription subunit 18 (251 aa).

Belongs to the Mediator complex subunit 18 family. In terms of assembly, component of the Mediator complex.

It is found in the nucleus. Functionally, component of the Mediator complex, a coactivator involved in the regulated transcription of nearly all RNA polymerase II-dependent genes. Mediator functions as a bridge to convey information from gene-specific regulatory proteins to the basal RNA polymerase II transcription machinery. Mediator is recruited to promoters by direct interactions with regulatory proteins and serves as a scaffold for the assembly of a functional preinitiation complex with RNA polymerase II and the general transcription factors. The polypeptide is Putative mediator of RNA polymerase II transcription subunit 18 (med18) (Dictyostelium discoideum (Social amoeba)).